The primary structure comprises 88 residues: Small ribosomal subunit protein bS20 (88 aa).

Residues Met-1–Arg-20 are disordered.

The protein belongs to the bacterial ribosomal protein bS20 family.

Functionally, binds directly to 16S ribosomal RNA. This chain is Small ribosomal subunit protein bS20, found in Campylobacter fetus subsp. fetus (strain 82-40).